The chain runs to 241 residues: MHIHLINPNSTASMTAQALESALLVKHAHTHVSASNPTDTPASIEGGADEAMSVPGMLAEIRQGEAQGVDAYVIACFDDPGLHAAREVAKGPVIGICQAAVQVAMTISRRFSVITTLPRSVPIIEDLVSDYGAERHCRKVRAIDLPVLALEEDPQRAERLLLKEIEIAKAEDGAEAIVLGCAGMSSLCDRLQKATGVPVIDGVTAAVKMAEALLGAGYATSKVNTYAYPRIKAAAGHKVCA.

The protein belongs to the HyuE racemase family. Homotetramer.

The enzyme catalyses a D-5-monosubstituted hydantoin = a L-5-monosubstituted hydantoin. It carries out the reaction D-5-benzylhydantoin = L-5-benzylhydantoin. It catalyses the reaction D-5-isobutylhydantoin = L-5-isobutylhydantoin. Its activity is regulated as follows. Inhibited by Cu(2+), Hg(2+), Pb(2+) and Zn(2+). The activity is twofold lower in the presence of Mn(2+), Co(2+) and Ni(2+). The insignificant effect of the metal chelating agent EDTA on the hydantoin racemase activity would indicate that it is not a metalloenzyme. In terms of biological role, may be involved in the asymmetric conversion of racemic 5-substituted hydantoins to the corresponding L-amino acids. Catalyzes the racemization via enolization of D- and L-5-monosubstituted hydantoins. The chain is Hydantoin racemase from Rhizobium meliloti (Ensifer meliloti).